A 736-amino-acid chain; its full sequence is Polyribonucleotide nucleotidyltransferase (736 aa).

2 residues coordinate Mg(2+): D488 and D494. Positions 555 to 614 (PMVQTLEIQKEKIRDVIGLGGKVIKELCKTFDVEIDISENGEVKVWGNVGENVKKAVQSI) constitute a KH domain. Residues 624–692 (GDIFDGEVVK…HKNRVKLTLR (69 aa)) form the S1 motif domain.

This sequence belongs to the polyribonucleotide nucleotidyltransferase family. Mg(2+) serves as cofactor.

The protein resides in the cytoplasm. The catalysed reaction is RNA(n+1) + phosphate = RNA(n) + a ribonucleoside 5'-diphosphate. In terms of biological role, involved in mRNA degradation. Catalyzes the phosphorolysis of single-stranded polyribonucleotides processively in the 3'- to 5'-direction. The protein is Polyribonucleotide nucleotidyltransferase of Orientia tsutsugamushi (strain Ikeda) (Rickettsia tsutsugamushi).